We begin with the raw amino-acid sequence, 486 residues long: Cysteine--tRNA ligase (486 aa).

Cysteine 30 contacts Zn(2+). Positions 32 to 42 (PTVYDRAHLGN) match the 'HIGH' region motif. Positions 221, 246, and 250 each coordinate Zn(2+). Residues 279–283 (KMSKS) carry the 'KMSKS' region motif. Lysine 282 lines the ATP pocket.

It belongs to the class-I aminoacyl-tRNA synthetase family. As to quaternary structure, monomer. The cofactor is Zn(2+).

It is found in the cytoplasm. It carries out the reaction tRNA(Cys) + L-cysteine + ATP = L-cysteinyl-tRNA(Cys) + AMP + diphosphate. This is Cysteine--tRNA ligase from Cereibacter sphaeroides (strain ATCC 17025 / ATH 2.4.3) (Rhodobacter sphaeroides).